A 318-amino-acid polypeptide reads, in one-letter code: Aspartate carbamoyltransferase catalytic subunit (318 aa).

Arginine 58 and threonine 59 together coordinate carbamoyl phosphate. Lysine 86 contacts L-aspartate. Residues arginine 108, histidine 141, and glutamine 144 each coordinate carbamoyl phosphate. Arginine 174 and arginine 226 together coordinate L-aspartate. Positions 270 and 271 each coordinate carbamoyl phosphate.

This sequence belongs to the aspartate/ornithine carbamoyltransferase superfamily. ATCase family. In terms of assembly, heterododecamer (2C3:3R2) of six catalytic PyrB chains organized as two trimers (C3), and six regulatory PyrI chains organized as three dimers (R2).

The catalysed reaction is carbamoyl phosphate + L-aspartate = N-carbamoyl-L-aspartate + phosphate + H(+). The protein operates within pyrimidine metabolism; UMP biosynthesis via de novo pathway; (S)-dihydroorotate from bicarbonate: step 2/3. Its function is as follows. Catalyzes the condensation of carbamoyl phosphate and aspartate to form carbamoyl aspartate and inorganic phosphate, the committed step in the de novo pyrimidine nucleotide biosynthesis pathway. This is Aspartate carbamoyltransferase catalytic subunit from Lactobacillus gasseri (strain ATCC 33323 / DSM 20243 / BCRC 14619 / CIP 102991 / JCM 1131 / KCTC 3163 / NCIMB 11718 / NCTC 13722 / AM63).